The primary structure comprises 345 residues: Uroporphyrinogen decarboxylase (345 aa).

Substrate-binding positions include 26–30 (RQAGR), phenylalanine 45, aspartate 75, tyrosine 151, serine 206, and histidine 320.

Belongs to the uroporphyrinogen decarboxylase family. In terms of assembly, homodimer.

It is found in the cytoplasm. It catalyses the reaction uroporphyrinogen III + 4 H(+) = coproporphyrinogen III + 4 CO2. It functions in the pathway porphyrin-containing compound metabolism; protoporphyrin-IX biosynthesis; coproporphyrinogen-III from 5-aminolevulinate: step 4/4. Catalyzes the decarboxylation of four acetate groups of uroporphyrinogen-III to yield coproporphyrinogen-III. This is Uroporphyrinogen decarboxylase from Staphylococcus carnosus (strain TM300).